The primary structure comprises 106 residues: UPF0060 membrane protein Bxeno_B1021 (106 aa).

Helical transmembrane passes span 2–22 (KTFLLYAVTAVAEIVGCYLPW), 30–50 (SIWLLVPGALSLALFAWLLTL), 58–78 (VYAAYGGVYVAVAIAWLWCVD), and 82–102 (PTLWDAAGVVFTLAGMAIIAF).

The protein belongs to the UPF0060 family.

The protein localises to the cell inner membrane. The sequence is that of UPF0060 membrane protein Bxeno_B1021 from Paraburkholderia xenovorans (strain LB400).